The primary structure comprises 219 residues: Albonoursin synthase (219 aa).

Belongs to the nitroreductase family. Homomer. FMN is required as a cofactor. Post-translationally, the N-terminus is blocked.

It is found in the cytoplasm. The catalysed reaction is cyclo(L-phenylalanyl-L-leucyl) + 2 O2 = albonoursin + 2 H2O2. In terms of biological role, involved in the biosynthesis of albonoursin (cyclo[(alpha,beta-dehydro-Phe)-(alpha,beta-dehydro-Leu)]), an antibacterial peptide. Catalyzes the formation of alpha,beta-dehydro-Phe (DPhe) and alpha,beta-dehydro-Leu (DLeu) residues during the biosynthesis of albonoursin. The catalytic reaction of cyclo(L-Phe-L-Leu) occurs in a two-step sequential alpha-beta-dehydrogenation leading first to cyclo(alpha,beta-dehydro-Phe-L-Leu) and finally to albonoursin. Can also use cyclo(L-Phe-L-His), cyclo(L-Trp-L-Trp), cyclo(L-Leu-L-Ala), cyclo(L-Phe-Gly), cyclo(L-Leu-Gly), cyclo(L-Ser-Gly) and cyclo(L-Glu-Gly) as substrate suggesting that the diketopiperazine ring is essential for the enzymatic reaction. This is Albonoursin synthase (albA) from Streptomyces noursei (Streptomyces albulus).